Consider the following 262-residue polypeptide: Enoyl-[acyl-carrier-protein] reductase [NADH] FabI (262 aa).

NAD(+)-binding positions include Gly13, 19–20 (SI), Gln40, 64–65 (DV), and Ile92. Ala95 lines the substrate pocket. Active-site proton acceptor residues include Tyr146 and Tyr156. NAD(+)-binding positions include Lys163 and 192–196 (IRTLA).

This sequence belongs to the short-chain dehydrogenases/reductases (SDR) family. FabI subfamily. As to quaternary structure, homotetramer.

The catalysed reaction is a 2,3-saturated acyl-[ACP] + NAD(+) = a (2E)-enoyl-[ACP] + NADH + H(+). It catalyses the reaction (2E)-butenoyl-[ACP] + NADH + H(+) = butanoyl-[ACP] + NAD(+). It carries out the reaction (2E)-decenoyl-[ACP] + NADH + H(+) = decanoyl-[ACP] + NAD(+). The enzyme catalyses (2E)-hexadecenoyl-[ACP] + NADH + H(+) = hexadecanoyl-[ACP] + NAD(+). The catalysed reaction is (2E,9Z)-hexadecadienoyl-[ACP] + NADH + H(+) = (9Z)-hexadecenoyl-[ACP] + NAD(+). It catalyses the reaction (2E)-5-methylhexenoyl-[ACP] + NADH + H(+) = 5-methylhexanoyl-[ACP] + NAD(+). Its pathway is lipid metabolism; fatty acid biosynthesis. The protein operates within cofactor biosynthesis; biotin biosynthesis. With respect to regulation, inhibited by diazaborines, triclosan (5-chloro-2-2,4-dichlorophenoxyphenol), 1,4-disubstituted imidazoles, 1,4-benzodiazepine derivatives, naphthyridinone derivatives, luteolin and curcumin. The antibiotic diazaborine interferes with the activity by binding to the protein and NAD. Functionally, catalyzes the reduction of a carbon-carbon double bond in an enoyl moiety that is covalently linked to an acyl carrier protein (ACP). Involved in the elongation cycle of fatty acid which are used in the lipid metabolism and in the biotin biosynthesis. In Escherichia coli (strain K12), this protein is Enoyl-[acyl-carrier-protein] reductase [NADH] FabI (fabI).